Here is a 157-residue protein sequence, read N- to C-terminus: Protein Smg (157 aa).

It belongs to the Smg family.

This chain is Protein Smg, found in Escherichia coli O139:H28 (strain E24377A / ETEC).